The following is a 280-amino-acid chain: Hydroxyethylthiazole kinase (280 aa).

Met58 contributes to the substrate binding site. Arg129 provides a ligand contact to ATP. Ala206 lines the substrate pocket.

The protein belongs to the Thz kinase family. The cofactor is Mg(2+).

It carries out the reaction 5-(2-hydroxyethyl)-4-methylthiazole + ATP = 4-methyl-5-(2-phosphooxyethyl)-thiazole + ADP + H(+). The protein operates within cofactor biosynthesis; thiamine diphosphate biosynthesis; 4-methyl-5-(2-phosphoethyl)-thiazole from 5-(2-hydroxyethyl)-4-methylthiazole: step 1/1. Its function is as follows. Thiazole kinase involved in thiamine salvage pathway. The polypeptide is Hydroxyethylthiazole kinase (THIM) (Zea mays (Maize)).